The following is a 125-amino-acid chain: Fluoride-specific ion channel FluC (125 aa).

4 helical membrane passes run 4–24, 32–52, 68–88, and 100–120; these read VIYV…VGIV, FLPW…GLFA, LLIT…LDTV, and AFYV…GLAV. Residues G75 and T78 each contribute to the Na(+) site.

It belongs to the fluoride channel Fluc/FEX (TC 1.A.43) family.

The protein resides in the cell inner membrane. The enzyme catalyses fluoride(in) = fluoride(out). Na(+) is not transported, but it plays an essential structural role and its presence is essential for fluoride channel function. Fluoride-specific ion channel. Important for reducing fluoride concentration in the cell, thus reducing its toxicity. The protein is Fluoride-specific ion channel FluC of Allorhizobium ampelinum (strain ATCC BAA-846 / DSM 112012 / S4) (Agrobacterium vitis (strain S4)).